A 1506-amino-acid chain; its full sequence is ABC transporter C family member 9 (1506 aa).

A run of 11 helical transmembrane segments spans residues methionine 37 to valine 57, isoleucine 84 to phenylalanine 104, valine 116 to valine 136, methionine 150 to isoleucine 170, phenylalanine 179 to isoleucine 199, alanine 315 to isoleucine 335, leucine 350 to threonine 370, phenylalanine 427 to isoleucine 447, leucine 452 to proline 472, phenylalanine 541 to methionine 561, and alanine 567 to leucine 587. In terms of domain architecture, ABC transmembrane type-1 1 spans alanine 314–glutamine 596. The 224-residue stretch at valine 630–alanine 853 folds into the ABC transporter 1 domain. Glycine 665–serine 672 serves as a coordination point for ATP. A run of 5 helical transmembrane segments spans residues leucine 934–tryptophan 956, isoleucine 976–isoleucine 996, methionine 1048–valine 1068, leucine 1167–isoleucine 1187, and isoleucine 1191–tryptophan 1211. Residues valine 936–asparagine 1218 form the ABC transmembrane type-1 2 domain. The ABC transporter 2 domain maps to phenylalanine 1257–lysine 1489. Glycine 1289–serine 1296 serves as a coordination point for ATP.

The protein belongs to the ABC transporter superfamily. ABCC family. Conjugate transporter (TC 3.A.1.208) subfamily. Ubiquitous.

The protein localises to the membrane. It carries out the reaction ATP + H2O + xenobioticSide 1 = ADP + phosphate + xenobioticSide 2.. Its function is as follows. Pump for glutathione S-conjugates. The protein is ABC transporter C family member 9 (ABCC9) of Arabidopsis thaliana (Mouse-ear cress).